Consider the following 588-residue polypeptide: Ufm1-specific protease (588 aa).

Catalysis depends on residues C420, D544, and H546.

It belongs to the peptidase C78 family. Interacts with odr-4.

It localises to the endoplasmic reticulum membrane. Its subcellular location is the cytoplasm. The protein resides in the perinuclear region. Functionally, thiol protease which recognizes and hydrolyzes the peptide bond at the C-terminal Gly of ufm-1, a ubiquitin-like modifier protein bound to a number of target proteins. Required, with oct-4, for the localization of a subset of 7 transmembrane domain odorant receptors, including odr-10, to the cilia of olfactory neurons AWA and AWC. Operates in aggregation behavior, and responses to oxygen levels. The chain is Ufm1-specific protease from Caenorhabditis briggsae.